Consider the following 65-residue polypeptide: Large ribosomal subunit protein bL35 (65 aa).

This sequence belongs to the bacterial ribosomal protein bL35 family.

The chain is Large ribosomal subunit protein bL35 from Chlorobium phaeovibrioides (strain DSM 265 / 1930) (Prosthecochloris vibrioformis (strain DSM 265)).